A 119-amino-acid chain; its full sequence is Beta-2-microglobulin (119 aa).

The N-terminal stretch at 1-20 is a signal peptide; sequence MARFVAVALLVLLSLSGLEA. Residues 25 to 114 enclose the Ig-like C1-type domain; that stretch reads PKIQVYSRHP…VTFSTPKTVK (90 aa). Cys-45 and Cys-100 are oxidised to a cystine.

Belongs to the beta-2-microglobulin family. As to quaternary structure, heterodimer of an alpha chain and a beta chain. Beta-2-microglobulin is the beta-chain of major histocompatibility complex class I molecules.

The protein localises to the secreted. Component of the class I major histocompatibility complex (MHC). Involved in the presentation of peptide antigens to the immune system. In Plecturocebus moloch (Dusky titi monkey), this protein is Beta-2-microglobulin (B2M).